The sequence spans 211 residues: ATP-dependent Clp protease proteolytic subunit (211 aa).

S114 serves as the catalytic Nucleophile. H139 is an active-site residue.

The protein belongs to the peptidase S14 family. As to quaternary structure, fourteen ClpP subunits assemble into 2 heptameric rings which stack back to back to give a disk-like structure with a central cavity, resembling the structure of eukaryotic proteasomes.

The protein localises to the cytoplasm. The enzyme catalyses Hydrolysis of proteins to small peptides in the presence of ATP and magnesium. alpha-casein is the usual test substrate. In the absence of ATP, only oligopeptides shorter than five residues are hydrolyzed (such as succinyl-Leu-Tyr-|-NHMec, and Leu-Tyr-Leu-|-Tyr-Trp, in which cleavage of the -Tyr-|-Leu- and -Tyr-|-Trp bonds also occurs).. Cleaves peptides in various proteins in a process that requires ATP hydrolysis. Has a chymotrypsin-like activity. Plays a major role in the degradation of misfolded proteins. This Pseudomonas fluorescens (strain Pf0-1) protein is ATP-dependent Clp protease proteolytic subunit.